The primary structure comprises 585 residues: Glutamate decarboxylase 2 (585 aa).

The segment at 1–24 (MASPGSGFWSFGSEDGSGDPENSG) is disordered. 4 positions are modified to phosphoserine: S3, S6, S10, and S13. Residues C30 and C45 are each lipidated (S-palmitoyl cysteine). Residue 181–183 (QLS) participates in substrate binding. At K396 the chain carries N6-(pyridoxal phosphate)lysine. R558 lines the substrate pocket.

It belongs to the group II decarboxylase family. As to quaternary structure, homodimer. Pyridoxal 5'-phosphate serves as cofactor. Post-translationally, phosphorylated; which does not affect kinetic parameters or subcellular location. Palmitoylated; which is required for presynaptic clustering.

Its subcellular location is the cytoplasm. It is found in the cytosol. The protein localises to the cytoplasmic vesicle. The protein resides in the presynaptic cell membrane. It localises to the golgi apparatus membrane. The enzyme catalyses L-glutamate + H(+) = 4-aminobutanoate + CO2. Functionally, catalyzes the production of GABA. The protein is Glutamate decarboxylase 2 (GAD2) of Sus scrofa (Pig).